A 183-amino-acid chain; its full sequence is Inosine triphosphate pyrophosphatase (183 aa).

8–13 (TGNKNK) lines the ITP pocket. Residue E36 participates in Mg(2+) binding. ITP is bound by residues K48, 64–65 (DT), K81, 140–143 (FGWD), K161, and 166–167 (HR).

It belongs to the HAM1 NTPase family. As to quaternary structure, homodimer. It depends on Mg(2+) as a cofactor. Requires Mn(2+) as cofactor.

It localises to the cytoplasm. The protein localises to the nucleus. It carries out the reaction ITP + H2O = IMP + diphosphate + H(+). It catalyses the reaction dITP + H2O = dIMP + diphosphate + H(+). The enzyme catalyses XTP + H2O = XMP + diphosphate + H(+). Functionally, pyrophosphatase that hydrolyzes non-canonical purine nucleotides such as inosine triphosphate (ITP), deoxyinosine triphosphate (dITP) or xanthosine 5'-triphosphate (XTP) to their respective monophosphate derivatives. The enzyme does not distinguish between the deoxy- and ribose forms. Probably excludes non-canonical purines from RNA and DNA precursor pools, thus preventing their incorporation into RNA and DNA and avoiding chromosomal lesions. In Emericella nidulans (strain FGSC A4 / ATCC 38163 / CBS 112.46 / NRRL 194 / M139) (Aspergillus nidulans), this protein is Inosine triphosphate pyrophosphatase.